A 301-amino-acid polypeptide reads, in one-letter code: GTPase Era (301 aa).

In terms of domain architecture, Era-type G spans 4–173 (KAGFVALIGK…LECISKYLSP (170 aa)). Positions 12 to 19 (GKPNAGKS) are G1. 12 to 19 (GKPNAGKS) contacts GTP. The interval 38-42 (NATRK) is G2. The segment at 64–67 (DTPG) is G3. GTP-binding positions include 64–68 (DTPGL) and 122–125 (SKID). Residues 122–125 (SKID) are G4. Positions 152–154 (LSA) are G5. Positions 204–280 (LSDEIPYESD…FLNLQVIAQK (77 aa)) constitute a KH type-2 domain.

Belongs to the TRAFAC class TrmE-Era-EngA-EngB-Septin-like GTPase superfamily. Era GTPase family. In terms of assembly, monomer.

It localises to the cytoplasm. It is found in the cell inner membrane. Functionally, an essential GTPase that binds both GDP and GTP, with rapid nucleotide exchange. Plays a role in 16S rRNA processing and 30S ribosomal subunit biogenesis and possibly also in cell cycle regulation and energy metabolism. In Helicobacter pylori (strain G27), this protein is GTPase Era.